A 357-amino-acid polypeptide reads, in one-letter code: sn-glycerol-3-phosphate import ATP-binding protein UgpC (357 aa).

Residues 4–235 (LKLQAVTKSY…PASLFVASFI (232 aa)) form the ABC transporter domain. Position 37 to 44 (37 to 44 (GPSGCGKS)) interacts with ATP.

It belongs to the ABC transporter superfamily. sn-glycerol-3-phosphate importer (TC 3.A.1.1.3) family. The complex is composed of two ATP-binding proteins (UgpC), two transmembrane proteins (UgpA and UgpE) and a solute-binding protein (UgpB).

The protein localises to the cell inner membrane. The catalysed reaction is sn-glycerol 3-phosphate(out) + ATP + H2O = sn-glycerol 3-phosphate(in) + ADP + phosphate + H(+). Functionally, part of the ABC transporter complex UgpBAEC involved in sn-glycerol-3-phosphate (G3P) import. Responsible for energy coupling to the transport system. The protein is sn-glycerol-3-phosphate import ATP-binding protein UgpC of Yersinia pseudotuberculosis serotype I (strain IP32953).